The chain runs to 249 residues: 5'-nucleotidase SurE (249 aa).

The a divalent metal cation site is built by aspartate 8, aspartate 9, serine 39, and asparagine 91.

Belongs to the SurE nucleotidase family. Requires a divalent metal cation as cofactor.

It is found in the cytoplasm. It catalyses the reaction a ribonucleoside 5'-phosphate + H2O = a ribonucleoside + phosphate. Its function is as follows. Nucleotidase that shows phosphatase activity on nucleoside 5'-monophosphates. This Stutzerimonas stutzeri (strain A1501) (Pseudomonas stutzeri) protein is 5'-nucleotidase SurE.